A 216-amino-acid chain; its full sequence is MKNVAIVGDGGHGKVIRELINARSDTRLAAVLDDKFKTFEGGKEWYTGPPKAVTELRRLIPDVLFLIAVGNNSVRKQLAERLGLGKDDFITLIHPSAIVSKSAVIGEGTVIMAGAIIQADARIGAHCIINTGAVAEHDNQISDYVHLSPRATLSGAVSVQEGAHVGTGASVIPQIIIGAWSIVGAGSAVIRSIPDRVTAAGAPARIISSIQTSNKG.

The active-site Proton acceptor is the His137. Acetyl-CoA is bound at residue His146.

This sequence belongs to the transferase hexapeptide repeat family. Forms oligomers.

It catalyses the reaction UDP-N-acetylbacillosamine + acetyl-CoA = UDP-N,N'-diacetylbacillosamine + CoA + H(+). Catalyzes the conversion of UDP-2,4,6-trideoxy-2-acetamido-4-amino glucose to UDP-2,4,6-trideoxy-2,4-diacetamido glucose, commonly known as UDP-N,N'-diacetylbacillosamine (UDP-diNAcBac). In Bacillus subtilis (strain 168), this protein is UDP-N-acetylbacillosamine N-acetyltransferase.